Reading from the N-terminus, the 52-residue chain is uncharacterized protein (52 aa).

2 helical membrane passes run 4 to 24 (IIIP…ISLE) and 25 to 45 (MSIV…FLFV).

The protein resides in the cell membrane. This is an uncharacterized protein from Bacillus subtilis (strain 168).